The sequence spans 434 residues: Probable zinc metalloprotease PTRG_04772 (434 aa).

Asparagine 88 is a glycosylation site (N-linked (GlcNAc...) asparagine). The Zn(2+) site is built by histidine 111, aspartate 131, and glutamate 164. A glycan (N-linked (GlcNAc...) asparagine) is linked at asparagine 179. Residue aspartate 191 participates in Zn(2+) binding. Residues asparagine 220, asparagine 299, asparagine 347, asparagine 353, asparagine 390, and asparagine 395 are each glycosylated (N-linked (GlcNAc...) asparagine). The Fibronectin type-III domain maps to 340-433; that stretch reads SPTNVGINTT…LPFPFGCARN (94 aa).

It belongs to the peptidase M28 family. M28B subfamily. Requires Zn(2+) as cofactor.

It is found in the secreted. This is Probable zinc metalloprotease PTRG_04772 from Pyrenophora tritici-repentis (strain Pt-1C-BFP) (Wheat tan spot fungus).